The sequence spans 364 residues: Transcription factor SPEECHLESS (364 aa).

The tract at residues 35–109 (GEISPTAAST…QKMSHVTVER (75 aa)) is disordered. Residue S38 is modified to Phosphoserine; by ASK7. Position 40 is a phosphothreonine; by ASK7 (T40). Over residues 40-53 (TAASTPKDGTTSSK) the composition is skewed to polar residues. Phosphoserine; by ASK7 is present on S43. Residue T44 is modified to Phosphothreonine; by ASK7. Residue S65 is modified to Phosphoserine; by ASK7. A compositionally biased stretch (acidic residues) spans 79–92 (EDEEEEDGDGEAEE). A basic motif region spans residues 99-112 (QQKMSHVTVERNRR). Residues 99–150 (QQKMSHVTVERNRRKQMNEHLTVLRSLMPCFYVKRGDQASIIGGVVEYISEL) enclose the bHLH domain. A helix-loop-helix motif region spans residues 113 to 150 (KQMNEHLTVLRSLMPCFYVKRGDQASIIGGVVEYISEL). S171 carries the phosphoserine; by ASK7 modification. The disordered stretch occupies residues 171 to 227 (SPRVVPSPRPSPPVLSPRKPPLSPRINHHQIHHHLLLPPISPRTPQPTSPYRAIPPQ). The span at 175–193 (VPSPRPSPPVLSPRKPPLS) shows a compositional bias: pro residues. Phosphoserine; by ASK7, MPK3 and MPK6 is present on S177. S181 is modified (phosphoserine; by ASK7). S186 is modified (phosphoserine; by CDKA-1, ASK7, MPK3 and MPK6). S193 carries the phosphoserine; by MPK3 and MPK6 modification. A compositionally biased stretch (basic residues) spans 196–205 (INHHQIHHHL). Pro residues predominate over residues 209–218 (PISPRTPQPT). S211 carries the phosphoserine; by MPK3 and MPK6 modification. T214 is subject to Phosphothreonine; by ASK7, MPK3 and MPK6. S219 bears the Phosphoserine; by ASK7, MPK3 and MPK6 mark.

Homodimer. Forms dimers with SCRM and SCRM2. May interact with CDKA-1. Phosphorylated by ASK7/BIN2 and ASK3/SK12; this post-translational modification inhibits activity and limit epidermal cell proliferation. Phosphorylation by MPK3 and MPK6 leads to the inhibition of stomatal fate and to degradation. Stabilized by CDKA-1-mediated phosphorylation at Ser-186 which promotes stomatal development. Expressed in developing leaf epidermis. Reduced accumulation in the stomatal lineage ground cells (SLGCs) where BASL is polarized in the cell cortex. Observed in small cells of non-protruding hypocotyl cell files and of developing cotyledon epidermis. Restricted to meristemoids (stomatal precursor cell) in leaves epidermis, mostly in dividing cells of non-protruding cell files.

It localises to the nucleus. Negatively regulated through phosphorylation by the MAPK module. Activity is constrained by polarized BASL in stomatal lineage ground cells (SLGCs) undergoing ACD. Functionally, transcription factor acting as an integration node for stomata and brassinosteroid (BR) signaling pathways to control stomatal initiation and development. Activates transcription when in the presence of SCRM/ICE1. Functions as a dimer with SCRM or SCRM2 during stomatal initiation. Required for the initiation, the spacing and the formation of stomata, by promoting the first asymmetric cell divisions. Together with FMA and MUTE, modulates the stomata formation. Involved in the regulation of growth reduction under osmotic stress (e.g. mannitol), associated with a quick decrease of meristemoid mother cells (MMCs) number lower stomatal index and density. This chain is Transcription factor SPEECHLESS, found in Arabidopsis thaliana (Mouse-ear cress).